The sequence spans 395 residues: Flap endonuclease 1 (395 aa).

The segment at 1–104 (MGIKQLFQII…GELAKRFQRK (104 aa)) is N-domain. Residue D34 participates in Mg(2+) binding. The DNA site is built by R47 and R70. Mg(2+) contacts are provided by D86, E158, E160, D179, and D181. Residues 122–253 (DIEKFSRRTV…TTALKLIRDH (132 aa)) are I-domain. E158 contacts DNA. DNA is bound by residues G231 and D233. Residue D233 participates in Mg(2+) binding. Residues 341–349 (QQARLEGFF) are interaction with PCNA. The segment at 344–395 (RLEGFFKPVPKTDAQKAAHKRKLEEKNEEKKKKLKQEKKDKAAAKSKPRGAA) is disordered. The segment covering 365–386 (KLEEKNEEKKKKLKQEKKDKAA) has biased composition (basic and acidic residues).

Belongs to the XPG/RAD2 endonuclease family. FEN1 subfamily. Interacts with PCNA. Three molecules of FEN1 bind to one PCNA trimer with each molecule binding to one PCNA monomer. PCNA stimulates the nuclease activity without altering cleavage specificity. Mg(2+) serves as cofactor. In terms of processing, phosphorylated. Phosphorylation upon DNA damage induces relocalization to the nuclear plasma.

The protein localises to the nucleus. It localises to the nucleolus. Its subcellular location is the nucleoplasm. The protein resides in the mitochondrion. Its function is as follows. Structure-specific nuclease with 5'-flap endonuclease and 5'-3' exonuclease activities involved in DNA replication and repair. During DNA replication, cleaves the 5'-overhanging flap structure that is generated by displacement synthesis when DNA polymerase encounters the 5'-end of a downstream Okazaki fragment. It enters the flap from the 5'-end and then tracks to cleave the flap base, leaving a nick for ligation. Also involved in the long patch base excision repair (LP-BER) pathway, by cleaving within the apurinic/apyrimidinic (AP) site-terminated flap. Acts as a genome stabilization factor that prevents flaps from equilibrating into structures that lead to duplications and deletions. Also possesses 5'-3' exonuclease activity on nicked or gapped double-stranded DNA, and exhibits RNase H activity. Also involved in replication and repair of rDNA and in repairing mitochondrial DNA. The chain is Flap endonuclease 1 from Fusarium vanettenii (strain ATCC MYA-4622 / CBS 123669 / FGSC 9596 / NRRL 45880 / 77-13-4) (Fusarium solani subsp. pisi).